A 985-amino-acid chain; its full sequence is Alanine--tRNA ligase, mitochondrial (985 aa).

Residues 1–23 (MAASVAAAARRLRRAIRRSPAWR) constitute a mitochondrion transit peptide. Residues R110, H128, W210, and 240–242 (LWN) each bind ATP. L-alanine contacts are provided by N242 and D265. ATP is bound at residue G269. Positions 632, 636, 749, and 753 each coordinate Zn(2+).

Belongs to the class-II aminoacyl-tRNA synthetase family. Monomer. The cofactor is Zn(2+).

The protein resides in the mitochondrion. The enzyme catalyses tRNA(Ala) + L-alanine + ATP = L-alanyl-tRNA(Ala) + AMP + diphosphate. The catalysed reaction is (S)-lactate + ATP + H(+) = (S)-lactoyl-AMP + diphosphate. It catalyses the reaction (S)-lactoyl-AMP + L-lysyl-[protein] = N(6)-[(S)-lactoyl]-L-lysyl-[protein] + AMP + 2 H(+). In terms of biological role, catalyzes the attachment of alanine to tRNA(Ala) in a two-step reaction: alanine is first activated by ATP to form Ala-AMP and then transferred to the acceptor end of tRNA(Ala). Also edits incorrectly charged tRNA(Ala) via its editing domain. In presence of high levels of lactate, also acts as a protein lactyltransferase that mediates lactylation of lysine residues in target proteins, such as CGAS. Acts as an inhibitor of cGAS/STING signaling by catalyzing lactylation of CGAS, preventing the formation of liquid-like droplets in which CGAS is activated. The sequence is that of Alanine--tRNA ligase, mitochondrial from Homo sapiens (Human).